Reading from the N-terminus, the 539-residue chain is Netrin-G1 (539 aa).

Residues Met1 to Gly28 form the signal peptide. Intrachain disulfides connect Cys33–Cys50, Cys72–Cys92, and Cys80–Cys88. Residues Asp46 to Arg296 enclose the Laminin N-terminal domain. Residues Cys80–Glu91 form an NGL discriminant loop I region. Asn133 carries N-linked (GlcNAc...) asparagine glycosylation. Cys182 and Cys206 are oxidised to a cystine. Positions Glu208–Tyr214 are NGL discriminant loop II. An NGL discriminant loop III region spans residues Glu273–Phe275. 15 disulfide bridges follow: Cys297–Cys306, Cys299–Cys315, Cys317–Cys326, Cys329–Cys354, Cys364–Cys373, Cys366–Cys384, Cys387–Cys396, Cys399–Cys417, Cys420–Cys432, Cys422–Cys438, Cys440–Cys449, Cys452–Cys462, Cys467–Cys480, Cys474–Cys486, and Cys488–Cys497. Laminin EGF-like domains follow at residues Cys297–Pro356, Cys364–Glu419, and Cys420–Asn469. N-linked (GlcNAc...) asparagine glycosylation occurs at Asn320. N-linked (GlcNAc...) asparagine glycosylation is present at Asn406. N-linked (GlcNAc...) asparagine glycosylation is present at Asn433. Ser510 is lipidated: GPI-anchor amidated serine. The propeptide at Asp511–Phe539 is removed in mature form.

Interacts with NGL1. N-glycosylated. Highly expressed in the thalamus, with very low expression, if any, in other tissues.

The protein resides in the cell membrane. Its function is as follows. Involved in controlling patterning and neuronal circuit formation at the laminar, cellular, subcellular and synaptic levels. Promotes neurite outgrowth of both axons and dendrites. This chain is Netrin-G1 (NTNG1), found in Homo sapiens (Human).